The primary structure comprises 398 residues: FK506-binding protein 4 (398 aa).

Disordered stretches follow at residues 66–120 (EVDE…DEYE), 164–232 (VKHP…QLAK), and 245–288 (DLIA…KKNK). Over residues 170–228 (EPLEDLYSDEDSEEYSDDELDQEIEEDDELDHDEASSEESDEDQEFYDAISEGDEDIDE) the composition is skewed to acidic residues. The segment covering 264–287 (PETKKSKKTKDEKNTKATENEKKN) has biased composition (basic and acidic residues). The PPIase FKBP-type domain maps to 312–398 (GSKVGMRYIG…TFDVKLVSLK (87 aa)).

Belongs to the FKBP-type PPIase family. FKBP3/4 subfamily. Binds to histones H3 and H4.

It is found in the nucleus. It catalyses the reaction [protein]-peptidylproline (omega=180) = [protein]-peptidylproline (omega=0). With respect to regulation, inhibited by both FK506 and rapamycin. Functionally, PPIase that acts as a histone chaperone. Histone proline isomerase that increases the rate of cis-trans isomerization at prolines on the histone H3 N-terminal tail. Proline isomerization influences H3 methylation thereby regulating gene expression. This chain is FK506-binding protein 4 (FPR4), found in Candida glabrata (strain ATCC 2001 / BCRC 20586 / JCM 3761 / NBRC 0622 / NRRL Y-65 / CBS 138) (Yeast).